The following is a 239-amino-acid chain: Norbelladine 4'-O-methyltransferase 2 (239 aa).

Residues V55, E77, 79 to 80, S85, D103, and A132 contribute to the S-adenosyl-L-methionine site; that span reads GV. Residue D155 participates in a divalent metal cation binding. Position 157 (D157) interacts with S-adenosyl-L-methionine. D181 and N182 together coordinate a divalent metal cation.

It belongs to the class I-like SAM-binding methyltransferase superfamily. Cation-dependent O-methyltransferase family. Mg(2+) is required as a cofactor.

The enzyme catalyses norbelladine + S-adenosyl-L-methionine = 4'-O-methylnorbelladine + S-adenosyl-L-homocysteine + H(+). It participates in alkaloid biosynthesis. 4'-O-methyltransferase converting norbelladine to 4'-O-methylnorbelladine. 4'-O-methylnorbelladine is a precursor to all Amaryllidaceae alkaloids such as galanthamine, lycorine and haemanthamine, and including haemanthamine- and crinamine-type alkaloids, promising anticancer agents. The polypeptide is Norbelladine 4'-O-methyltransferase 2 (Narcissus aff. pseudonarcissus MK-2014 (Daffodil)).